The following is a 161-amino-acid chain: Alpha-crystallin A chain (161 aa).

The interval 1-51 (ALGPFYPSRXXXXXXXXXXXXXXXXXXXXXXXXXXXXQSLFRTVLDSGISE) is required for complex formation with BFSP1 and BFSP2. Gln-38 bears the Deamidated glutamine; partial mark. Positions 40-150 (LFRTVLDSGI…SHSERAIPVS (111 aa)) constitute a sHSP domain. Lys-87 is subject to N6-acetyllysine. Position 88 (His-88) interacts with Zn(2+). A Deamidated asparagine; partial modification is found at Asn-89. Residues Glu-90 and His-95 each coordinate Zn(2+). The residue at position 110 (Ser-110) is a Phosphoserine. Position 111 is a deamidated asparagine; partial (Asn-111). A disulfide bridge connects residues Cys-119 and Cys-130. At Gln-135 the chain carries Deamidated glutamine; partial. Residues 140-161 (ASHSERAIPVSREEKPSSAPSS) are disordered. Over residues 141–155 (SHSERAIPVSREEKP) the composition is skewed to basic and acidic residues. His-142 contributes to the Zn(2+) binding site. O-linked (GlcNAc) serine glycosylation is present at Ser-150.

This sequence belongs to the small heat shock protein (HSP20) family. In terms of assembly, heteromer composed of three CRYAA and one CRYAB subunits. Inter-subunit bridging via zinc ions enhances stability, which is crucial as there is no protein turn over in the lens. Can also form homodimers and homotetramers (dimers of dimers) which serve as the building blocks of homooligomers. Within homooligomers, the zinc-binding motif is created from residues of 3 different molecules. His-88 and Glu-90 from one molecule are ligands of the zinc ion, and His-95 and His-142 residues from additional molecules complete the site with tetrahedral coordination geometry. Part of a complex required for lens intermediate filament formation composed of BFSP1, BFSP2 and CRYAA. Undergoes age-dependent proteolytical cleavage at the C-terminus.

It is found in the cytoplasm. The protein localises to the nucleus. Contributes to the transparency and refractive index of the lens. In its oxidized form (absence of intramolecular disulfide bond), acts as a chaperone, preventing aggregation of various proteins under a wide range of stress conditions. Required for the correct formation of lens intermediate filaments as part of a complex composed of BFSP1, BFSP2 and CRYAA. This Galegeeska rufescens (East African rufous sengi) protein is Alpha-crystallin A chain (CRYAA).